A 130-amino-acid polypeptide reads, in one-letter code: Small ribosomal subunit protein uS11 (130 aa).

It belongs to the universal ribosomal protein uS11 family. Part of the 30S ribosomal subunit. Interacts with proteins S7 and S18. Binds to IF-3.

Its function is as follows. Located on the platform of the 30S subunit, it bridges several disparate RNA helices of the 16S rRNA. Forms part of the Shine-Dalgarno cleft in the 70S ribosome. This Prochlorococcus marinus (strain NATL1A) protein is Small ribosomal subunit protein uS11.